Consider the following 692-residue polypeptide: 5-taurinomethyluridine-[tRNA] synthase subunit MTO1, mitochondrial (692 aa).

The N-terminal 25 residues, 1–25 (MFYLRGCGRWVAASFTKQQFPLVRL), are a transit peptide targeting the mitochondrion. Residues 43–48 (GGGHAG), V155, S218, and Q407 contribute to the FAD site. At K508 the chain carries N6-methyllysine. The disordered stretch occupies residues 669-692 (AAMNESPKTDQCLRNADRLQERQL). A compositionally biased stretch (basic and acidic residues) spans 683-692 (NADRLQERQL).

It belongs to the MnmG family. In terms of assembly, homodimer; forms a dimer in the presence of potassium. Interacts with GTPBP3; forms the GTPBP3-MTO1 complex composed of homodimers of GTPBP3 and MTO1. It depends on FAD as a cofactor.

Its subcellular location is the mitochondrion. The catalysed reaction is 5,10-methylenetetrahydrofolate + uridine(34) in tRNA + taurine + GTP + A + H2O = 5-taurinomethyluridine(34) in tRNA + 7,8-dihydrofolate + GDP + AH2 + phosphate + H(+). Its function is as follows. Component of the GTPBP3-MTO1 complex that catalyzes the 5-taurinomethyluridine (taum(5)U) modification at the 34th wobble position (U34) of mitochondrial tRNAs (mt-tRNAs), which plays a role in mt-tRNA decoding and mitochondrial translation. Taum(5)U formation on mammalian mt-tRNA requires the presence of both GTPBP3-mediated GTPase activity and MTO1 catalytic activity. This chain is 5-taurinomethyluridine-[tRNA] synthase subunit MTO1, mitochondrial (MTO1), found in Macaca fascicularis (Crab-eating macaque).